A 562-amino-acid chain; its full sequence is Oxygen-dependent choline dehydrogenase (562 aa).

4–33 (DYIIIGAGSAGNVLATRLTEDPNTTVLLLE) is an FAD binding site. The active-site Proton acceptor is the His473.

It belongs to the GMC oxidoreductase family. Requires FAD as cofactor.

It catalyses the reaction choline + A = betaine aldehyde + AH2. The catalysed reaction is betaine aldehyde + NAD(+) + H2O = glycine betaine + NADH + 2 H(+). It participates in amine and polyamine biosynthesis; betaine biosynthesis via choline pathway; betaine aldehyde from choline (cytochrome c reductase route): step 1/1. Its function is as follows. Involved in the biosynthesis of the osmoprotectant glycine betaine. Catalyzes the oxidation of choline to betaine aldehyde and betaine aldehyde to glycine betaine at the same rate. This is Oxygen-dependent choline dehydrogenase from Escherichia coli (strain SMS-3-5 / SECEC).